The primary structure comprises 486 residues: Cysteine--tRNA ligase (486 aa).

Cys30 serves as a coordination point for Zn(2+). The 'HIGH' region signature appears at 32-42 (PTVYDRAHLGN). Residues Cys221, His246, and Glu250 each contribute to the Zn(2+) site. The 'KMSKS' region signature appears at 279–283 (KMSKS). Residue Lys282 coordinates ATP.

It belongs to the class-I aminoacyl-tRNA synthetase family. In terms of assembly, monomer. Zn(2+) is required as a cofactor.

Its subcellular location is the cytoplasm. The enzyme catalyses tRNA(Cys) + L-cysteine + ATP = L-cysteinyl-tRNA(Cys) + AMP + diphosphate. This Cereibacter sphaeroides (strain ATCC 17029 / ATH 2.4.9) (Rhodobacter sphaeroides) protein is Cysteine--tRNA ligase.